We begin with the raw amino-acid sequence, 240 residues long: MKSVILASIAAMFATSAMAADVVVSEPSAPTAAPVDTFSWTGGYIGINAGYAGGKFKHPFSSFDKEDNEQVSGSLDVTAGGFVGGVQAGYNWQLDNGVVLGAETDFQGSSVTGSISAGASGLEGKAETKVEWFGTVRARLGYTATERLMVYGTGGLAYGKVKSAFNLGDDASALHTWSDKTKAGWTLGAGAEYAINNNWTLKSEYLYTDLGKRNLVDVDNSFLESKVNFHTVRVGLNYKF.

Positions 1-19 (MKSVILASIAAMFATSAMA) are cleaved as a signal peptide. Residues 48 to 83 (NAGYAGGKFKHPFSSFDKEDNEQVSGSLDVTAGGFV) form an epitope recognized by the monoclonal antibody A59/10F09/G10 region.

It belongs to the Omp25/RopB family. In terms of assembly, oligomeric.

It is found in the cell outer membrane. In terms of biological role, major outer membrane protein associated with peptidoglycans. May function as a porin. This is 31 kDa outer-membrane immunogenic protein (omp31) from Brucella melitensis biotype 1 (strain ATCC 23456 / CCUG 17765 / NCTC 10094 / 16M).